Consider the following 402-residue polypeptide: Acetate kinase (402 aa).

Asn-13 provides a ligand contact to Mg(2+). Lys-20 serves as a coordination point for ATP. Position 94 (Arg-94) interacts with substrate. Asp-151 (proton donor/acceptor) is an active-site residue. Residues 211–215 (HLGNG), 285–287 (DFR), and 333–337 (GVGEN) contribute to the ATP site. Glu-387 lines the Mg(2+) pocket.

It belongs to the acetokinase family. Homodimer. It depends on Mg(2+) as a cofactor. Mn(2+) serves as cofactor.

It is found in the cytoplasm. It catalyses the reaction acetate + ATP = acetyl phosphate + ADP. It participates in metabolic intermediate biosynthesis; acetyl-CoA biosynthesis; acetyl-CoA from acetate: step 1/2. In terms of biological role, catalyzes the formation of acetyl phosphate from acetate and ATP. Can also catalyze the reverse reaction. The chain is Acetate kinase from Nocardia farcinica (strain IFM 10152).